A 182-amino-acid polypeptide reads, in one-letter code: MFRTLTVVPLLALGLSLSACADLGQPTVRADLLDQTGKVTGTATFSPSPIGTRVSIEVSGLKAGPHGLHIHENPNCNPGPDAQGQTIPFGAAGGHFDPGASHNHDGPHARNDQGHGGDLPMITVGEDGKGRLNFDTNRLKMTGPTGVLGRSIVIHADADDYQTNPAGNSGGRERCGVFQAIN.

An N-terminal signal peptide occupies residues 1 to 19 (MFRTLTVVPLLALGLSLSA). A lipid anchor (N-palmitoyl cysteine) is attached at Cys-20. A lipid anchor (S-diacylglycerol cysteine) is attached at Cys-20. Cu cation contacts are provided by His-69, His-71, and His-95. Cys-76 and Cys-175 are oxidised to a cystine. Positions 91–118 (AAGGHFDPGASHNHDGPHARNDQGHGGD) are disordered. His-95, His-104, His-115, and Asp-118 together coordinate Zn(2+). Residues 102–115 (HNHDGPHARNDQGH) are compositionally biased toward basic and acidic residues.

Belongs to the Cu-Zn superoxide dismutase family. It depends on Cu cation as a cofactor. The cofactor is Zn(2+).

It localises to the cell membrane. The catalysed reaction is 2 superoxide + 2 H(+) = H2O2 + O2. Functionally, destroys radicals which are normally produced within the cells and which are toxic to biological systems. In Deinococcus radiodurans (strain ATCC 13939 / DSM 20539 / JCM 16871 / CCUG 27074 / LMG 4051 / NBRC 15346 / NCIMB 9279 / VKM B-1422 / R1), this protein is Superoxide dismutase [Cu-Zn] (sodC).